The following is a 103-amino-acid chain: Small ribosomal subunit protein uS10 (103 aa).

It belongs to the universal ribosomal protein uS10 family. As to quaternary structure, part of the 30S ribosomal subunit.

Its function is as follows. Involved in the binding of tRNA to the ribosomes. This Azoarcus sp. (strain BH72) protein is Small ribosomal subunit protein uS10.